We begin with the raw amino-acid sequence, 642 residues long: uncharacterized protein (642 aa).

Positions 15 and 118 each coordinate Mg(2+). The PINc domain maps to 29-149 (VCVDTCVVID…YNLAKAQGIE (121 aa)). In terms of domain architecture, KH spans 510-578 (DNSIDLIVPE…ELESTRIYET (69 aa)).

It in the N-terminal section; belongs to the PINc/VapC protein family. Mg(2+) serves as cofactor.

This is an uncharacterized protein from Methanocaldococcus jannaschii (strain ATCC 43067 / DSM 2661 / JAL-1 / JCM 10045 / NBRC 100440) (Methanococcus jannaschii).